We begin with the raw amino-acid sequence, 225 residues long: MMYHIPGVLSPQDVARFREQLEQAEWVDGRVTTGAQGAQVKNNQQVDTRSTLYAALQNEVLNAVNQHALFFAAALPRTLSTPLFNRYQNNETYGFHVDGAVRSHPQNGWMRTDLSATLFLSDPQSYDGGELVVNDTFGQHRVKLPAGDLVLYPSSSLHCVTPVTRGVRVASFMWIQSMIRDDKKRAMLFELDKNIQSLKSRYGENEEILSLLNLYHNLLREWSEI.

Residues 78-177 (TLSTPLFNRY…RVASFMWIQS (100 aa)) form the Fe2OG dioxygenase domain. Residues histidine 96, aspartate 98, and histidine 158 each coordinate Fe cation. Residue arginine 168 coordinates 2-oxoglutarate.

Requires Fe(2+) as cofactor. L-ascorbate serves as cofactor.

This chain is PKHD-type hydroxylase YbiX, found in Shigella boydii serotype 4 (strain Sb227).